A 440-amino-acid polypeptide reads, in one-letter code: Thymidine phosphorylase (440 aa).

It belongs to the thymidine/pyrimidine-nucleoside phosphorylase family. Homodimer.

It carries out the reaction thymidine + phosphate = 2-deoxy-alpha-D-ribose 1-phosphate + thymine. The protein operates within pyrimidine metabolism; dTMP biosynthesis via salvage pathway; dTMP from thymine: step 1/2. The enzymes which catalyze the reversible phosphorolysis of pyrimidine nucleosides are involved in the degradation of these compounds and in their utilization as carbon and energy sources, or in the rescue of pyrimidine bases for nucleotide synthesis. The polypeptide is Thymidine phosphorylase (Proteus mirabilis (strain HI4320)).